Reading from the N-terminus, the 447-residue chain is Argininosuccinate lyase (447 aa).

Belongs to the lyase 1 family. Argininosuccinate lyase subfamily.

The protein localises to the cytoplasm. The enzyme catalyses 2-(N(omega)-L-arginino)succinate = fumarate + L-arginine. The protein operates within amino-acid biosynthesis; L-arginine biosynthesis; L-arginine from L-ornithine and carbamoyl phosphate: step 3/3. The chain is Argininosuccinate lyase from Bacteroides fragilis (strain ATCC 25285 / DSM 2151 / CCUG 4856 / JCM 11019 / LMG 10263 / NCTC 9343 / Onslow / VPI 2553 / EN-2).